The primary structure comprises 213 residues: Leucyl/phenylalanyl-tRNA--protein transferase (213 aa).

The protein belongs to the L/F-transferase family.

It localises to the cytoplasm. The enzyme catalyses N-terminal L-lysyl-[protein] + L-leucyl-tRNA(Leu) = N-terminal L-leucyl-L-lysyl-[protein] + tRNA(Leu) + H(+). The catalysed reaction is N-terminal L-arginyl-[protein] + L-leucyl-tRNA(Leu) = N-terminal L-leucyl-L-arginyl-[protein] + tRNA(Leu) + H(+). It catalyses the reaction L-phenylalanyl-tRNA(Phe) + an N-terminal L-alpha-aminoacyl-[protein] = an N-terminal L-phenylalanyl-L-alpha-aminoacyl-[protein] + tRNA(Phe). Functionally, functions in the N-end rule pathway of protein degradation where it conjugates Leu, Phe and, less efficiently, Met from aminoacyl-tRNAs to the N-termini of proteins containing an N-terminal arginine or lysine. This chain is Leucyl/phenylalanyl-tRNA--protein transferase, found in Campylobacter lari (strain RM2100 / D67 / ATCC BAA-1060).